Consider the following 538-residue polypeptide: Putative cysteine ligase BshC (538 aa).

Residues 460-483 (KINEQIELLEKMLKRNVEKKHEVQ) adopt a coiled-coil conformation.

It belongs to the BshC family.

Involved in bacillithiol (BSH) biosynthesis. May catalyze the last step of the pathway, the addition of cysteine to glucosamine malate (GlcN-Mal) to generate BSH. The chain is Putative cysteine ligase BshC from Bacillus mycoides (strain KBAB4) (Bacillus weihenstephanensis).